Reading from the N-terminus, the 641-residue chain is E3 ubiquitin-protein ligase TRIM47 (641 aa).

The RING-type zinc-finger motif lies at 9-58 (CPICLEPLREPVTLPCGHNFCLACLGALWPHRSAGGTGGSGGPARCPLCQ). Residue T72 is modified to Phosphothreonine. The disordered stretch occupies residues 81–123 (QGSVPGPMSAPASGSTRGATPEPSAPSAPPPAPEPSAPCAPEQ). Residues 103-118 (PSAPSAPPPAPEPSAP) are compositionally biased toward pro residues. A B box-type zinc finger spans residues 181–221 (LEESLCPRHLRPLERYCRVERVCLCEACATQDHRGHELVPL). Zn(2+)-binding residues include C186, H189, C208, and H213. Residues 305–325 (QGDLRRQEEQRSRLSKARHNL) adopt a coiled-coil conformation. S393 is subject to Phosphoserine. The disordered stretch occupies residues 396-416 (DGLQKLGSEDVESQDPDSTSL). Residues 413-634 (STSLLESEAP…LQIGPLKKSC (222 aa)) enclose the B30.2/SPRY domain. A Phosphoserine modification is found at S464. Position 585 is an omega-N-methylarginine (R585). Residue S591 is modified to Phosphoserine.

This sequence belongs to the TRIM/RBCC family. Expressed in hepatocytes, expression is increased in fatty livers.

The protein localises to the cytoplasm. It localises to the nucleus. The enzyme catalyses S-ubiquitinyl-[E2 ubiquitin-conjugating enzyme]-L-cysteine + [acceptor protein]-L-lysine = [E2 ubiquitin-conjugating enzyme]-L-cysteine + N(6)-ubiquitinyl-[acceptor protein]-L-lysine.. The protein operates within protein modification; protein ubiquitination. E3 ubiquitin-protein ligase that mediates the ubiquitination and proteasomal degradation of CYLD. This Mus musculus (Mouse) protein is E3 ubiquitin-protein ligase TRIM47.